We begin with the raw amino-acid sequence, 353 residues long: 4-hydroxy-3-methylbut-2-en-1-yl diphosphate synthase (flavodoxin) (353 aa).

Residues C265, C268, C300, and E307 each contribute to the [4Fe-4S] cluster site.

The protein belongs to the IspG family. Requires [4Fe-4S] cluster as cofactor.

It catalyses the reaction (2E)-4-hydroxy-3-methylbut-2-enyl diphosphate + oxidized [flavodoxin] + H2O + 2 H(+) = 2-C-methyl-D-erythritol 2,4-cyclic diphosphate + reduced [flavodoxin]. It participates in isoprenoid biosynthesis; isopentenyl diphosphate biosynthesis via DXP pathway; isopentenyl diphosphate from 1-deoxy-D-xylulose 5-phosphate: step 5/6. In terms of biological role, converts 2C-methyl-D-erythritol 2,4-cyclodiphosphate (ME-2,4cPP) into 1-hydroxy-2-methyl-2-(E)-butenyl 4-diphosphate. This Sulfurihydrogenibium sp. (strain YO3AOP1) protein is 4-hydroxy-3-methylbut-2-en-1-yl diphosphate synthase (flavodoxin).